A 348-amino-acid chain; its full sequence is Protein RecA (348 aa).

67-74 (GPESSGKT) provides a ligand contact to ATP.

This sequence belongs to the RecA family.

Its subcellular location is the cytoplasm. Its function is as follows. Can catalyze the hydrolysis of ATP in the presence of single-stranded DNA, the ATP-dependent uptake of single-stranded DNA by duplex DNA, and the ATP-dependent hybridization of homologous single-stranded DNAs. It interacts with LexA causing its activation and leading to its autocatalytic cleavage. The chain is Protein RecA from Amycolatopsis mediterranei (strain U-32).